A 66-amino-acid chain; its full sequence is Large ribosomal subunit protein bL33 (66 aa).

This sequence belongs to the bacterial ribosomal protein bL33 family.

The sequence is that of Large ribosomal subunit protein bL33 from Prochlorococcus marinus (strain MIT 9303).